The chain runs to 396 residues: Probable sugar efflux transporter (396 aa).

The next 12 helical transmembrane spans lie at Val-15–Leu-35, Val-50–Leu-70, Leu-81–Phe-101, Val-103–Ala-123, Ala-136–Leu-156, Phe-170–Leu-190, Pro-209–Tyr-229, Phe-246–Gly-266, Ala-275–Ala-295, Ile-299–Met-319, Val-333–Gly-353, and Met-364–Phe-384.

It belongs to the major facilitator superfamily. SotB (TC 2.A.1.2) family.

The protein resides in the cell inner membrane. Functionally, involved in the efflux of sugars. The physiological role may be the reduction of the intracellular concentration of toxic sugars or sugar metabolites. This chain is Probable sugar efflux transporter, found in Escherichia coli O17:K52:H18 (strain UMN026 / ExPEC).